We begin with the raw amino-acid sequence, 354 residues long: Histidinol-phosphate aminotransferase (354 aa).

Positions 1–11 (MKSFLSDKAKS) are enriched in basic and acidic residues. Residues 1–33 (MKSFLSDKAKSIEPYTPGEQPKDKNYIKLNTNE) form a disordered region. Lysine 211 bears the N6-(pyridoxal phosphate)lysine mark.

This sequence belongs to the class-II pyridoxal-phosphate-dependent aminotransferase family. Histidinol-phosphate aminotransferase subfamily. Homodimer. Pyridoxal 5'-phosphate serves as cofactor.

The enzyme catalyses L-histidinol phosphate + 2-oxoglutarate = 3-(imidazol-4-yl)-2-oxopropyl phosphate + L-glutamate. It functions in the pathway amino-acid biosynthesis; L-histidine biosynthesis; L-histidine from 5-phospho-alpha-D-ribose 1-diphosphate: step 7/9. In Brachyspira hyodysenteriae (strain ATCC 49526 / WA1), this protein is Histidinol-phosphate aminotransferase.